The sequence spans 348 residues: Protein-arginine N-acetylglucosaminyltransferase SseK2 (348 aa).

Residues 64–66 (QWF), tyrosine 88, and 237–240 (YLDA) contribute to the UDP-N-acetyl-alpha-D-glucosamine site. The DXD motif signature appears at 239–241 (DAD). Residue aspartate 241 coordinates Mn(2+). Glutamate 271 functions as the Proton acceptor in the catalytic mechanism. Residues asparagine 338, serine 340, and 345–348 (SSWR) each bind UDP-N-acetyl-alpha-D-glucosamine. Positions 338 and 340 each coordinate Mn(2+).

The protein belongs to the glycosyltransferase NleB family. It depends on Mn(2+) as a cofactor.

It is found in the secreted. The protein resides in the host Golgi apparatus. It catalyses the reaction L-arginyl-[protein] + UDP-N-acetyl-alpha-D-glucosamine = N(omega)-(N-acetyl-beta-D-glucosaminyl)-L-arginyl-[protein] + UDP + H(+). Protein-arginine N-acetylglucosaminyltransferase activity is inhibited by 100066N compound (flavone analog) and 102644N compound (a substituted isoxazole). Its function is as follows. Protein-arginine N-acetylglucosaminyltransferase effector that catalyzes the transfer of a single N-acetylglucosamine (GlcNAc) to a conserved arginine residue in the death domain of host proteins such as FADD: arginine GlcNAcylation prevents homotypic/heterotypic death domain interactions. Also acts on host proteins without a death domain: catalyzes arginine GlcNAcylation of host small Rab1 GTPase, thereby preventing GTPase activity and leading to impaired host vesicular protein transport. In contrast to Ssek1, not able to disrupt TNF signaling in infected cells. This chain is Protein-arginine N-acetylglucosaminyltransferase SseK2, found in Salmonella typhimurium (strain SL1344).